A 78-amino-acid chain; its full sequence is Acyl carrier protein (78 aa).

The Carrier domain occupies 2–77; that stretch reads STIEESVKAI…AAIDFIQASQ (76 aa). Serine 37 carries the O-(pantetheine 4'-phosphoryl)serine modification.

This sequence belongs to the acyl carrier protein (ACP) family. Post-translationally, 4'-phosphopantetheine is transferred from CoA to a specific serine of apo-ACP by AcpS. This modification is essential for activity because fatty acids are bound in thioester linkage to the sulfhydryl of the prosthetic group.

It localises to the cytoplasm. The protein operates within lipid metabolism; fatty acid biosynthesis. Carrier of the growing fatty acid chain in fatty acid biosynthesis. This is Acyl carrier protein from Sodalis glossinidius (strain morsitans).